The primary structure comprises 485 residues: Glutamate mutase epsilon subunit (485 aa).

R66 serves as a coordination point for L-glutamate. G68 is an adenosylcob(III)alamin binding site. R100 is an L-glutamate binding site. Adenosylcob(III)alamin is bound at residue N123. Residues 149–150, E171, and Y177 contribute to the L-glutamate site; that span reads RH. Residue P180 coordinates adenosylcob(III)alamin. Residue Y181 coordinates L-glutamate. Positions 297, 326, 330, and 334 each coordinate adenosylcob(III)alamin.

This sequence belongs to the methylaspartate mutase GlmE subunit family. As to quaternary structure, heterotetramer composed of 2 epsilon subunits (GlmE) and 2 sigma subunits (GlmS). GlmE exists as a homodimer and GlmS as a monomer. Adenosylcob(III)alamin serves as cofactor.

It catalyses the reaction (2S,3S)-3-methyl-L-aspartate = L-glutamate. The protein operates within amino-acid degradation; L-glutamate degradation via mesaconate pathway; acetate and pyruvate from L-glutamate: step 1/4. Catalyzes the carbon skeleton rearrangement of L-glutamate to L-threo-3-methylaspartate ((2S,3S)-3-methylaspartate). In Treponema denticola (strain ATCC 35405 / DSM 14222 / CIP 103919 / JCM 8153 / KCTC 15104), this protein is Glutamate mutase epsilon subunit.